The following is a 330-amino-acid chain: Ketol-acid reductoisomerase (NADP(+)) (330 aa).

The KARI N-terminal Rossmann domain occupies Met1–Thr181. NADP(+) contacts are provided by residues Tyr24 to Gln27, Arg47, Ser50, Ser52, and Asp82 to Gln85. Residue His107 is part of the active site. Gly133 serves as a coordination point for NADP(+). A KARI C-terminal knotted domain is found at Asn182–Leu327. Asp190, Glu194, Glu226, and Glu230 together coordinate Mg(2+). Substrate is bound at residue Ser251.

This sequence belongs to the ketol-acid reductoisomerase family. The cofactor is Mg(2+).

It carries out the reaction (2R)-2,3-dihydroxy-3-methylbutanoate + NADP(+) = (2S)-2-acetolactate + NADPH + H(+). The enzyme catalyses (2R,3R)-2,3-dihydroxy-3-methylpentanoate + NADP(+) = (S)-2-ethyl-2-hydroxy-3-oxobutanoate + NADPH + H(+). The protein operates within amino-acid biosynthesis; L-isoleucine biosynthesis; L-isoleucine from 2-oxobutanoate: step 2/4. It participates in amino-acid biosynthesis; L-valine biosynthesis; L-valine from pyruvate: step 2/4. Functionally, involved in the biosynthesis of branched-chain amino acids (BCAA). Catalyzes an alkyl-migration followed by a ketol-acid reduction of (S)-2-acetolactate (S2AL) to yield (R)-2,3-dihydroxy-isovalerate. In the isomerase reaction, S2AL is rearranged via a Mg-dependent methyl migration to produce 3-hydroxy-3-methyl-2-ketobutyrate (HMKB). In the reductase reaction, this 2-ketoacid undergoes a metal-dependent reduction by NADPH to yield (R)-2,3-dihydroxy-isovalerate. This chain is Ketol-acid reductoisomerase (NADP(+)), found in Chlorobium luteolum (strain DSM 273 / BCRC 81028 / 2530) (Pelodictyon luteolum).